The sequence spans 298 residues: UDP-N-acetylenolpyruvoylglucosamine reductase (298 aa).

The region spanning 26–191 (KTGGEAEYLA…LSATFSLTPG (166 aa)) is the FAD-binding PCMH-type domain. The active site involves Arg-170. Ser-220 acts as the Proton donor in catalysis. The active site involves Glu-290.

This sequence belongs to the MurB family. The cofactor is FAD.

It localises to the cytoplasm. It carries out the reaction UDP-N-acetyl-alpha-D-muramate + NADP(+) = UDP-N-acetyl-3-O-(1-carboxyvinyl)-alpha-D-glucosamine + NADPH + H(+). Its pathway is cell wall biogenesis; peptidoglycan biosynthesis. Its function is as follows. Cell wall formation. The chain is UDP-N-acetylenolpyruvoylglucosamine reductase from Lactobacillus helveticus (strain DPC 4571).